Consider the following 492-residue polypeptide: Regulatory protein ViaA (492 aa).

This sequence belongs to the ViaA family. As to quaternary structure, homodimer. Interacts with RavA.

The protein resides in the cytoplasm. Its function is as follows. Component of the RavA-ViaA chaperone complex, which may act on the membrane to optimize the function of some of the respiratory chains. ViaA stimulates the ATPase activity of RavA. In Pectobacterium carotovorum subsp. carotovorum (strain PC1), this protein is Regulatory protein ViaA.